The primary structure comprises 396 residues: Obg-like ATPase 1 (396 aa).

The region spanning 23-283 (LKIGIVGLPN…MSAEEKQKYL (261 aa)) is the OBG-type G domain. Residue 32-37 (NVGKST) participates in ATP binding. 2 residues coordinate Mg(2+): Ser36 and Thr56. Position 231 (Leu231) interacts with ATP. Positions 267 to 274 (LELKLQDM) match the Nuclear export signal motif. Residues 304-387 (QLEYFFTAGP…EDGDIIFFKF (84 aa)) enclose the TGS domain.

Belongs to the TRAFAC class OBG-HflX-like GTPase superfamily. OBG GTPase family. YchF/OLA1 subfamily. Monomer. The cofactor is Mg(2+).

It is found in the cytoplasm. It localises to the nucleus. Its subcellular location is the nucleolus. In terms of biological role, hydrolyzes ATP, and can also hydrolyze GTP with lower efficiency. Has lower affinity for GTP. In Gallus gallus (Chicken), this protein is Obg-like ATPase 1.